A 72-amino-acid chain; its full sequence is DNA gyrase inhibitor YacG (72 aa).

Residues Cys-17, Cys-20, Cys-32, and Cys-36 each contribute to the Zn(2+) site. Positions 52-72 (PGPEEDEMSYPPHSNDGNRSR) are disordered.

The protein belongs to the DNA gyrase inhibitor YacG family. As to quaternary structure, interacts with GyrB. Requires Zn(2+) as cofactor.

In terms of biological role, inhibits all the catalytic activities of DNA gyrase by preventing its interaction with DNA. Acts by binding directly to the C-terminal domain of GyrB, which probably disrupts DNA binding by the gyrase. In Methylorubrum extorquens (strain CM4 / NCIMB 13688) (Methylobacterium extorquens), this protein is DNA gyrase inhibitor YacG.